Here is a 489-residue protein sequence, read N- to C-terminus: UDP-N-acetylmuramoyl-L-alanyl-D-glutamate--2,6-diaminopimelate ligase (489 aa).

UDP-N-acetyl-alpha-D-muramoyl-L-alanyl-D-glutamate is bound at residue S32. ATP is bound at residue 113–119 (GTNGKTT). UDP-N-acetyl-alpha-D-muramoyl-L-alanyl-D-glutamate-binding positions include 154–155 (TT), S181, Q187, and R189. The residue at position 221 (K221) is an N6-carboxylysine. Meso-2,6-diaminopimelate is bound by residues R381, 405–408 (DNPR), G456, and E460. The Meso-diaminopimelate recognition motif signature appears at 405–408 (DNPR).

It belongs to the MurCDEF family. MurE subfamily. It depends on Mg(2+) as a cofactor. Post-translationally, carboxylation is probably crucial for Mg(2+) binding and, consequently, for the gamma-phosphate positioning of ATP.

The protein localises to the cytoplasm. It carries out the reaction UDP-N-acetyl-alpha-D-muramoyl-L-alanyl-D-glutamate + meso-2,6-diaminopimelate + ATP = UDP-N-acetyl-alpha-D-muramoyl-L-alanyl-gamma-D-glutamyl-meso-2,6-diaminopimelate + ADP + phosphate + H(+). It functions in the pathway cell wall biogenesis; peptidoglycan biosynthesis. Its function is as follows. Catalyzes the addition of meso-diaminopimelic acid to the nucleotide precursor UDP-N-acetylmuramoyl-L-alanyl-D-glutamate (UMAG) in the biosynthesis of bacterial cell-wall peptidoglycan. This chain is UDP-N-acetylmuramoyl-L-alanyl-D-glutamate--2,6-diaminopimelate ligase, found in Gloeobacter violaceus (strain ATCC 29082 / PCC 7421).